We begin with the raw amino-acid sequence, 165 residues long: Nucleotide-binding protein P9301_05061 (165 aa).

Belongs to the YajQ family.

Nucleotide-binding protein. The polypeptide is Nucleotide-binding protein P9301_05061 (Prochlorococcus marinus (strain MIT 9301)).